The chain runs to 163 residues: Shikimate kinase (163 aa).

10 to 15 (GVGKTT) lines the ATP pocket. Thr-14 contributes to the Mg(2+) binding site. Substrate-binding residues include Asp-28, Arg-52, and Gly-75. Residue Arg-116 participates in ATP binding. Residue Arg-134 coordinates substrate. ATP is bound at residue Arg-151.

The protein belongs to the shikimate kinase family. Monomer. Requires Mg(2+) as cofactor.

The protein localises to the cytoplasm. The enzyme catalyses shikimate + ATP = 3-phosphoshikimate + ADP + H(+). Its pathway is metabolic intermediate biosynthesis; chorismate biosynthesis; chorismate from D-erythrose 4-phosphate and phosphoenolpyruvate: step 5/7. Its function is as follows. Catalyzes the specific phosphorylation of the 3-hydroxyl group of shikimic acid using ATP as a cosubstrate. This Streptococcus pyogenes serotype M4 (strain MGAS10750) protein is Shikimate kinase.